Here is an 82-residue protein sequence, read N- to C-terminus: UPF0291 protein LJ_1507 (82 aa).

The interval 61 to 82 (DGKEVTSEKAKEAQRRKGLRKD) is disordered.

It belongs to the UPF0291 family.

Its subcellular location is the cytoplasm. The polypeptide is UPF0291 protein LJ_1507 (Lactobacillus johnsonii (strain CNCM I-12250 / La1 / NCC 533)).